The following is a 1119-amino-acid chain: DISARM protein DrmA (1119 aa).

The disordered stretch occupies residues 73–95; the sequence is PESGMEEDVEQQRNSELEQEAEE. Residues 813 to 986 form the Helicase C-terminal domain; the sequence is ELSKYIDPYR…ATPYASRARD (174 aa).

Belongs to the helicase family.

Its subcellular location is the cytoplasm. Its function is as follows. Component of antiviral defense system DISARM (defense island system associated with restriction-modification), composed of DrmE, DrmA, DrmB, DrmC and DrmMII. DISARM is probably a multi-gene restriction module, this subunit is probably a helicase. Expression of DISARM in B.subtilis (strain BEST7003) confers resistance to phages Nf, phi29, phi105, phi3T, SPO1, SPR and SPP1. Protection is over 10(7)-fold against phi3T, 10(4)-10(5)-fold against Nf, phi29, phi105 and SPR, 100-fold against SPO1 and 10-fold against SPP1. DISARM does not interfere with phage adsorption, but instead interferes with (phi3T) DNA replication early in its cycle, preventing replication, circularization and lysogeny and probably causes phage DNA degradation (DNA is degraded in SPP1-infected cells). The chain is DISARM protein DrmA from Bacillus paralicheniformis (strain ATCC 9945a / NCIMB 11709 / CD-2).